Here is a 933-residue protein sequence, read N- to C-terminus: Isoleucine--tRNA ligase (933 aa).

The short motif at 57–67 (PYANGNIHVGH) is the 'HIGH' region element. E554 is an L-isoleucyl-5'-AMP binding site. The 'KMSKS' region signature appears at 595 to 599 (KMSKS). Position 598 (K598) interacts with ATP.

The protein belongs to the class-I aminoacyl-tRNA synthetase family. IleS type 1 subfamily. In terms of assembly, monomer.

Its subcellular location is the cytoplasm. The enzyme catalyses tRNA(Ile) + L-isoleucine + ATP = L-isoleucyl-tRNA(Ile) + AMP + diphosphate. Its function is as follows. Catalyzes the attachment of isoleucine to tRNA(Ile). As IleRS can inadvertently accommodate and process structurally similar amino acids such as valine, to avoid such errors it has two additional distinct tRNA(Ile)-dependent editing activities. One activity is designated as 'pretransfer' editing and involves the hydrolysis of activated Val-AMP. The other activity is designated 'posttransfer' editing and involves deacylation of mischarged Val-tRNA(Ile). The polypeptide is Isoleucine--tRNA ligase (Streptococcus pyogenes serotype M3 (strain ATCC BAA-595 / MGAS315)).